Consider the following 274-residue polypeptide: 2,3,4,5-tetrahydropyridine-2,6-dicarboxylate N-succinyltransferase (274 aa).

Arginine 104 and aspartate 141 together coordinate substrate.

Belongs to the transferase hexapeptide repeat family. As to quaternary structure, homotrimer.

Its subcellular location is the cytoplasm. The enzyme catalyses (S)-2,3,4,5-tetrahydrodipicolinate + succinyl-CoA + H2O = (S)-2-succinylamino-6-oxoheptanedioate + CoA. It functions in the pathway amino-acid biosynthesis; L-lysine biosynthesis via DAP pathway; LL-2,6-diaminopimelate from (S)-tetrahydrodipicolinate (succinylase route): step 1/3. The chain is 2,3,4,5-tetrahydropyridine-2,6-dicarboxylate N-succinyltransferase from Salmonella typhi.